The following is a 147-amino-acid chain: D-aminoacyl-tRNA deacylase (147 aa).

The Gly-cisPro motif, important for rejection of L-amino acids signature appears at 136 to 137 (GP).

Belongs to the DTD family. Homodimer.

The protein resides in the cytoplasm. The catalysed reaction is glycyl-tRNA(Ala) + H2O = tRNA(Ala) + glycine + H(+). It catalyses the reaction a D-aminoacyl-tRNA + H2O = a tRNA + a D-alpha-amino acid + H(+). Its function is as follows. An aminoacyl-tRNA editing enzyme that deacylates mischarged D-aminoacyl-tRNAs. Also deacylates mischarged glycyl-tRNA(Ala), protecting cells against glycine mischarging by AlaRS. Acts via tRNA-based rather than protein-based catalysis; rejects L-amino acids rather than detecting D-amino acids in the active site. By recycling D-aminoacyl-tRNA to D-amino acids and free tRNA molecules, this enzyme counteracts the toxicity associated with the formation of D-aminoacyl-tRNA entities in vivo and helps enforce protein L-homochirality. The sequence is that of D-aminoacyl-tRNA deacylase from Streptococcus pneumoniae serotype 4 (strain ATCC BAA-334 / TIGR4).